A 64-amino-acid chain; its full sequence is LKDGYIVDDVNCTYFCGRNAYCNEECIKLKGESGYCQWASPYGNACYCYKLPDHVRTKGPGRCN.

One can recognise an LCN-type CS-alpha/beta domain in the interval 2-64; that stretch reads KDGYIVDDVN…VRTKGPGRCN (63 aa). Cystine bridges form between cysteine 12–cysteine 63, cysteine 16–cysteine 36, cysteine 22–cysteine 46, and cysteine 26–cysteine 48.

Belongs to the long (4 C-C) scorpion toxin superfamily. Sodium channel inhibitor family. Alpha subfamily. As to expression, expressed by the venom gland.

It localises to the secreted. Alpha toxins bind voltage-independently at site-3 of sodium channels (Nav) and inhibit the inactivation of the activated channels, thereby blocking neuronal transmission. This toxin is active against mammals. The recombinant toxin selectively inhibits the fast inactivation of hNav1.7/SCN9A channel (EC(50)=136.7 nM). Is potent in inhibiting the fast inactivation of hNav1.7 and has little effect on the steady-state inactivation. In vivo, intravenous injection into mice induces muscle contraction, leading to severe paralysis and death. The chain is Alpha-mammal toxin AnCra1 from Androctonus crassicauda (Arabian fat-tailed scorpion).